The primary structure comprises 195 residues: A-type ATP synthase subunit E (195 aa).

This sequence belongs to the V-ATPase E subunit family. In terms of assembly, has multiple subunits with at least A(3), B(3), C, D, E, F, H, I and proteolipid K(x).

It is found in the cell membrane. Component of the A-type ATP synthase that produces ATP from ADP in the presence of a proton gradient across the membrane. This Staphylothermus marinus (strain ATCC 43588 / DSM 3639 / JCM 9404 / F1) protein is A-type ATP synthase subunit E.